Consider the following 264-residue polypeptide: 3-methyl-2-oxobutanoate hydroxymethyltransferase (264 aa).

Positions 45 and 84 each coordinate Mg(2+). 3-methyl-2-oxobutanoate-binding positions include 45-46, Asp84, and Lys112; that span reads DS. A Mg(2+)-binding site is contributed by Glu114. The Proton acceptor role is filled by Glu181.

Belongs to the PanB family. Homodecamer; pentamer of dimers. The cofactor is Mg(2+).

It is found in the cytoplasm. The enzyme catalyses 3-methyl-2-oxobutanoate + (6R)-5,10-methylene-5,6,7,8-tetrahydrofolate + H2O = 2-dehydropantoate + (6S)-5,6,7,8-tetrahydrofolate. The protein operates within cofactor biosynthesis; (R)-pantothenate biosynthesis; (R)-pantoate from 3-methyl-2-oxobutanoate: step 1/2. Its function is as follows. Catalyzes the reversible reaction in which hydroxymethyl group from 5,10-methylenetetrahydrofolate is transferred onto alpha-ketoisovalerate to form ketopantoate. This chain is 3-methyl-2-oxobutanoate hydroxymethyltransferase, found in Shewanella denitrificans (strain OS217 / ATCC BAA-1090 / DSM 15013).